A 238-amino-acid polypeptide reads, in one-letter code: 7-cyano-7-deazaguanine synthase (238 aa).

12–22 is a binding site for ATP; that stretch reads FSGGQDSTTCL. Cys191, Cys200, Cys203, and Cys206 together coordinate Zn(2+).

This sequence belongs to the QueC family. Requires Zn(2+) as cofactor.

It carries out the reaction 7-carboxy-7-deazaguanine + NH4(+) + ATP = 7-cyano-7-deazaguanine + ADP + phosphate + H2O + H(+). Its pathway is purine metabolism; 7-cyano-7-deazaguanine biosynthesis. Functionally, catalyzes the ATP-dependent conversion of 7-carboxy-7-deazaguanine (CDG) to 7-cyano-7-deazaguanine (preQ(0)). The polypeptide is 7-cyano-7-deazaguanine synthase (Shewanella oneidensis (strain ATCC 700550 / JCM 31522 / CIP 106686 / LMG 19005 / NCIMB 14063 / MR-1)).